The following is a 178-amino-acid chain: Protein GrpE (178 aa).

Positions 1–11 (MADELSEKSVE) are enriched in basic and acidic residues. The disordered stretch occupies residues 1–32 (MADELSEKSVEGTEEDGESAPAEGTTEGVPVD).

This sequence belongs to the GrpE family. As to quaternary structure, homodimer.

The protein resides in the cytoplasm. In terms of biological role, participates actively in the response to hyperosmotic and heat shock by preventing the aggregation of stress-denatured proteins, in association with DnaK and GrpE. It is the nucleotide exchange factor for DnaK and may function as a thermosensor. Unfolded proteins bind initially to DnaJ; upon interaction with the DnaJ-bound protein, DnaK hydrolyzes its bound ATP, resulting in the formation of a stable complex. GrpE releases ADP from DnaK; ATP binding to DnaK triggers the release of the substrate protein, thus completing the reaction cycle. Several rounds of ATP-dependent interactions between DnaJ, DnaK and GrpE are required for fully efficient folding. The sequence is that of Protein GrpE from Methanothrix thermoacetophila (strain DSM 6194 / JCM 14653 / NBRC 101360 / PT) (Methanosaeta thermophila).